Consider the following 511-residue polypeptide: Maturase K (511 aa).

The protein belongs to the intron maturase 2 family. MatK subfamily.

The protein resides in the plastid. The protein localises to the chloroplast. Usually encoded in the trnK tRNA gene intron. Probably assists in splicing its own and other chloroplast group II introns. In Chloranthus spicatus (Chulantree), this protein is Maturase K.